A 285-amino-acid chain; its full sequence is Polyamine aminopropyltransferase (285 aa).

One can recognise a PABS domain in the interval 2-237 (QMWFSQYHTV…GYWLFGFASK (236 aa)). Residue Q31 participates in S-methyl-5'-thioadenosine binding. D86 contacts spermidine. S-methyl-5'-thioadenosine-binding positions include E106 and 137-138 (DG). Catalysis depends on D155, which acts as the Proton acceptor. Spermidine is bound at residue 155-158 (DSTD).

This sequence belongs to the spermidine/spermine synthase family. As to quaternary structure, homodimer or homotetramer.

Its subcellular location is the cytoplasm. The catalysed reaction is S-adenosyl 3-(methylsulfanyl)propylamine + putrescine = S-methyl-5'-thioadenosine + spermidine + H(+). The protein operates within amine and polyamine biosynthesis; spermidine biosynthesis; spermidine from putrescine: step 1/1. Its function is as follows. Catalyzes the irreversible transfer of a propylamine group from the amino donor S-adenosylmethioninamine (decarboxy-AdoMet) to putrescine (1,4-diaminobutane) to yield spermidine. The sequence is that of Polyamine aminopropyltransferase from Agathobacter rectalis (strain ATCC 33656 / DSM 3377 / JCM 17463 / KCTC 5835 / VPI 0990) (Eubacterium rectale).